The sequence spans 128 residues: Infection structure-specific protein 56 (128 aa).

Composition is skewed to polar residues over residues 27 to 36 (HATYPQSQPH) and 87 to 101 (TSISASQHQRQDSQS). 2 disordered regions span residues 27–48 (HATYPQSQPHATKRSFGPAVPS) and 86–128 (GTSI…STSA). A compositionally biased stretch (basic and acidic residues) spans 115-128 (KDAKKELKDPSTSA).

In terms of biological role, general role in the development of germlings including formation of the infection structures. The polypeptide is Infection structure-specific protein 56 (INF56) (Uromyces appendiculatus (Rust fungus)).